A 426-amino-acid chain; its full sequence is MAKQIQAIRGMNDILPTQSPLWQKVEAVLRSSVSAYGYSEIRTPIVENTDLFKRSIGEVTDIVEKEMYTFADNNGDSLTLRPEGTASTVRAGNENGLLYNQEQRLWYMGPMFRHERPQKGRYRQFNQFGVEVYGIGTADIDAEVLMLSARLWEKLGISDHVSLELNTLGDPAERAVYRDALIAFLEQHKDALDEDSKRRMYSNPLRVLDSKDQNVQAILAGAPELMDFLGEESKTHFSQLRELLDAVGIKYTINPRLVRGLDYYNRTVFEWVTSSLGSQGTVLAGGRYDGLVAQLGGKDTPAVGFAMGLERIVLLLETLELNKDIPSEVDVYVTAMGDSCLVEAIKIAQELRSALPNLKVMSHCGGGNVKKQMKRADKSGASVALLIGEDELAEGMVTVKHLRNDIEQQRVARSALGAFLAELAIK.

This sequence belongs to the class-II aminoacyl-tRNA synthetase family. In terms of assembly, homodimer.

The protein resides in the cytoplasm. The catalysed reaction is tRNA(His) + L-histidine + ATP = L-histidyl-tRNA(His) + AMP + diphosphate + H(+). The chain is Histidine--tRNA ligase from Shewanella baltica (strain OS223).